A 425-amino-acid chain; its full sequence is tRNA(Ile)-lysidine synthase (425 aa).

27-32 (SGGLDS) is a binding site for ATP.

The protein belongs to the tRNA(Ile)-lysidine synthase family.

It localises to the cytoplasm. It catalyses the reaction cytidine(34) in tRNA(Ile2) + L-lysine + ATP = lysidine(34) in tRNA(Ile2) + AMP + diphosphate + H(+). Its function is as follows. Ligates lysine onto the cytidine present at position 34 of the AUA codon-specific tRNA(Ile) that contains the anticodon CAU, in an ATP-dependent manner. Cytidine is converted to lysidine, thus changing the amino acid specificity of the tRNA from methionine to isoleucine. The polypeptide is tRNA(Ile)-lysidine synthase (Streptococcus sanguinis (strain SK36)).